Here is a 121-residue protein sequence, read N- to C-terminus: MSNQVLLDKLDRTTESLSQALAQLVKLSSIDRASADSDGDNDGTTDSITSVATNGVMMVHAHTTQLIRGVQDLLVITRAIRETWVLGQIPKKNGDEDAIDYEKCERLLEKAMDDFFGPVAL.

Belongs to the Mediator complex subunit 22 family. In terms of assembly, component of the Mediator complex.

Its subcellular location is the nucleus. Its function is as follows. Component of the Mediator complex, a coactivator involved in the regulated transcription of nearly all RNA polymerase II-dependent genes. Mediator functions as a bridge to convey information from gene-specific regulatory proteins to the basal RNA polymerase II transcription machinery. Mediator is recruited to promoters by direct interactions with regulatory proteins and serves as a scaffold for the assembly of a functional preinitiation complex with RNA polymerase II and the general transcription factors. This chain is Mediator of RNA polymerase II transcription subunit 22 (SRB6), found in Eremothecium gossypii (strain ATCC 10895 / CBS 109.51 / FGSC 9923 / NRRL Y-1056) (Yeast).